Consider the following 173-residue polypeptide: Translation initiation factor IF-3 (173 aa).

This sequence belongs to the IF-3 family. Monomer.

The protein localises to the cytoplasm. Its function is as follows. IF-3 binds to the 30S ribosomal subunit and shifts the equilibrium between 70S ribosomes and their 50S and 30S subunits in favor of the free subunits, thus enhancing the availability of 30S subunits on which protein synthesis initiation begins. In Bartonella bacilliformis (strain ATCC 35685 / KC583 / Herrer 020/F12,63), this protein is Translation initiation factor IF-3.